Consider the following 276-residue polypeptide: NH(3)-dependent NAD(+) synthetase (276 aa).

43–50 contacts ATP; it reads GISGGVDS. Position 49 (aspartate 49) interacts with Mg(2+). Arginine 146 serves as a coordination point for deamido-NAD(+). Threonine 166 contacts ATP. Mg(2+) is bound at residue glutamate 171. Deamido-NAD(+)-binding residues include lysine 179 and aspartate 186. ATP is bound by residues lysine 195 and threonine 217. 266-267 lines the deamido-NAD(+) pocket; that stretch reads HK.

This sequence belongs to the NAD synthetase family. As to quaternary structure, homodimer.

The catalysed reaction is deamido-NAD(+) + NH4(+) + ATP = AMP + diphosphate + NAD(+) + H(+). Its pathway is cofactor biosynthesis; NAD(+) biosynthesis; NAD(+) from deamido-NAD(+) (ammonia route): step 1/1. Functionally, catalyzes the ATP-dependent amidation of deamido-NAD to form NAD. Uses ammonia as a nitrogen source. The chain is NH(3)-dependent NAD(+) synthetase from Shewanella halifaxensis (strain HAW-EB4).